The sequence spans 459 residues: Ribulose bisphosphate carboxylase large chain (459 aa).

An N6,N6,N6-trimethyllysine modification is found at K4. Residues N113 and T163 each contribute to the substrate site. K165 (proton acceptor) is an active-site residue. Residue K167 participates in substrate binding. Positions 191, 193, and 194 each coordinate Mg(2+). K191 is subject to N6-carboxylysine. Residue H284 is the Proton acceptor of the active site. The substrate site is built by R285, H317, and S369.

This sequence belongs to the RuBisCO large chain family. Type I subfamily. As to quaternary structure, heterohexadecamer of 8 large chains and 8 small chains; disulfide-linked. The disulfide link is formed within the large subunit homodimers. Mg(2+) is required as a cofactor. Post-translationally, the disulfide bond which can form in the large chain dimeric partners within the hexadecamer appears to be associated with oxidative stress and protein turnover.

It localises to the plastid. It is found in the chloroplast. It catalyses the reaction 2 (2R)-3-phosphoglycerate + 2 H(+) = D-ribulose 1,5-bisphosphate + CO2 + H2O. It carries out the reaction D-ribulose 1,5-bisphosphate + O2 = 2-phosphoglycolate + (2R)-3-phosphoglycerate + 2 H(+). Functionally, ruBisCO catalyzes two reactions: the carboxylation of D-ribulose 1,5-bisphosphate, the primary event in carbon dioxide fixation, as well as the oxidative fragmentation of the pentose substrate in the photorespiration process. Both reactions occur simultaneously and in competition at the same active site. The polypeptide is Ribulose bisphosphate carboxylase large chain (Nypa fruticans (Nypa palm)).